The following is a 184-amino-acid chain: Chaperone protein YcdY (184 aa).

It belongs to the TorD/DmsD family. In terms of assembly, interacts with YcdX.

In terms of biological role, acts as a chaperone that increases YcdX activity, maybe by facilitating the correct insertion of the zinc ions into the catalytic site of YcdX. Involved in the swarming motility process. The polypeptide is Chaperone protein YcdY (ycdY) (Escherichia coli (strain K12)).